Consider the following 173-residue polypeptide: NADH-quinone oxidoreductase subunit B (173 aa).

The [4Fe-4S] cluster site is built by C52, C53, C117, and C147.

It belongs to the complex I 20 kDa subunit family. NDH-1 is composed of 14 different subunits. Subunits NuoB, C, D, E, F, and G constitute the peripheral sector of the complex. [4Fe-4S] cluster is required as a cofactor.

The protein localises to the cell inner membrane. It carries out the reaction a quinone + NADH + 5 H(+)(in) = a quinol + NAD(+) + 4 H(+)(out). NDH-1 shuttles electrons from NADH, via FMN and iron-sulfur (Fe-S) centers, to quinones in the respiratory chain. Couples the redox reaction to proton translocation (for every two electrons transferred, four hydrogen ions are translocated across the cytoplasmic membrane), and thus conserves the redox energy in a proton gradient. The polypeptide is NADH-quinone oxidoreductase subunit B (Pelagibacter ubique (strain HTCC1062)).